The primary structure comprises 721 residues: Polyribonucleotide nucleotidyltransferase (721 aa).

Positions 495 and 501 each coordinate Mg(2+). Residues 562–621 (PRLLSFRIDPELIGTVIGPGGRTIKGITERTNTKIDIEDGGIVTIASHDGAAAEEAQKII) enclose the KH domain. Positions 631-699 (GEIFPGVVTR…SRGRINLTLR (69 aa)) constitute an S1 motif domain.

It belongs to the polyribonucleotide nucleotidyltransferase family. Mg(2+) serves as cofactor.

It is found in the cytoplasm. It catalyses the reaction RNA(n+1) + phosphate = RNA(n) + a ribonucleoside 5'-diphosphate. Its function is as follows. Involved in mRNA degradation. Catalyzes the phosphorolysis of single-stranded polyribonucleotides processively in the 3'- to 5'-direction. The chain is Polyribonucleotide nucleotidyltransferase from Prochlorococcus marinus subsp. pastoris (strain CCMP1986 / NIES-2087 / MED4).